Here is a 225-residue protein sequence, read N- to C-terminus: Jeltraxin (225 aa).

An N-terminal signal peptide occupies residues 1-19 (MKGLVIFFCLFYGCHVAGA). Positions 21-223 (GKTIMLFPQK…IVVLRNQFIP (203 aa)) constitute a Pentraxin (PTX) domain. A disulfide bridge links cysteine 51 with cysteine 112. Positions 75 and 76 each coordinate Ca(2+). Asparagine 87 is a glycosylation site (N-linked (GlcNAc...) asparagine). 4 residues coordinate Ca(2+): glutamate 153, glutamine 154, aspartate 155, and glutamine 165. Asparagine 207 carries N-linked (GlcNAc...) asparagine glycosylation.

Homodecamer consisting of two homopentamer units. Pentraxin (or pentaxin) have a discoid arrangement of 5 non-covalently bound subunits. It depends on Ca(2+) as a cofactor. Post-translationally, glycosylated. As to expression, oviduct. Highest expression levels were detected in the pars convoluta with lower levels detected in the pars recta. No expression was detected in the pars uterina.

Its subcellular location is the secreted. Calcium-dependent beta-galactose specific lectin. The protein is Jeltraxin of Lepidobatrachus laevis (Budgett's frog).